Here is a 445-residue protein sequence, read N- to C-terminus: WD repeat domain phosphoinositide-interacting protein 2 (445 aa).

The WD 1 repeat unit spans residues 182–222 (AHDSPLAALAFDASGTKLATASEKGTVIRVFSIPEGQKLFE). The L/FRRG motif signature appears at 223–226 (FRRG). 2 WD repeats span residues 228 to 267 (KRCV…EKPP) and 311 to 349 (GHKN…GGEC). At serine 395 the chain carries Phosphoserine.

The protein belongs to the WD repeat PROPPIN family. As to quaternary structure, interacts with TECPR1. Interacts with ATG16L1. Interacts with ATG5. Interacts with WIPI1. Interacts with WDR45. May interact with NUDC. Interacts with ULK1 and RB1CC1.

The protein localises to the preautophagosomal structure membrane. Component of the autophagy machinery that controls the major intracellular degradation process by which cytoplasmic materials are packaged into autophagosomes and delivered to lysosomes for degradation. Involved in an early step of the formation of preautophagosomal structures. Binds and is activated by phosphatidylinositol 3-phosphate (PtdIns3P) forming on membranes of the endoplasmic reticulum upon activation of the upstream ULK1 and PI3 kinases. Mediates ER-isolation membranes contacts by interacting with the ULK1:RB1CC1 complex and PtdIns3P. Once activated, WIPI2 recruits at phagophore assembly sites the ATG12-ATG5-ATG16L1 complex that directly controls the elongation of the nascent autophagosomal membrane. This Mus musculus (Mouse) protein is WD repeat domain phosphoinositide-interacting protein 2.